Consider the following 1001-residue polypeptide: UPF0182 protein Mjls_1469 (1001 aa).

The next 7 membrane-spanning stretches (helical) occupy residues 16–36, 61–81, 112–132, 174–194, 209–229, 258–278, and 286–306; these read VLIG…RFID, VVVF…GLAL, LFGF…AQSY, FVAT…FGGI, IQLV…YWLD, KLIL…AIVL, and IGVV…PLVV. A compositionally biased stretch (low complexity) spans 900–929; that stretch reads ATGPAPANLPDGQPAAQPPNGQQPAAQTPG. Positions 900–977 are disordered; sequence ATGPAPANLP…MSGLQDAQRS (78 aa).

Belongs to the UPF0182 family.

The protein localises to the cell membrane. The sequence is that of UPF0182 protein Mjls_1469 from Mycobacterium sp. (strain JLS).